Consider the following 235-residue polypeptide: Carboxy-S-adenosyl-L-methionine synthase (235 aa).

S-adenosyl-L-methionine-binding positions include tyrosine 35, 60 to 62, 84 to 85, 110 to 111, asparagine 125, and arginine 192; these read GCS, DN, and DI.

Belongs to the class I-like SAM-binding methyltransferase superfamily. Cx-SAM synthase family. Homodimer.

The catalysed reaction is prephenate + S-adenosyl-L-methionine = carboxy-S-adenosyl-L-methionine + 3-phenylpyruvate + H2O. Functionally, catalyzes the conversion of S-adenosyl-L-methionine (SAM) to carboxy-S-adenosyl-L-methionine (Cx-SAM). The chain is Carboxy-S-adenosyl-L-methionine synthase from Sulfurimonas denitrificans (strain ATCC 33889 / DSM 1251) (Thiomicrospira denitrificans (strain ATCC 33889 / DSM 1251)).